The chain runs to 956 residues: MALKYHQQIISDLLEDSNGGLLILSSGLSLAKLIASLLILHSPSQGTLLLLLSPAAQSLKSRIIHYISSLDSPTPTEITADLPANQRYSLYTSGSPFFITPRILIVDLLTQRIPVSSLAGIFILNAHSISETSTEAFIIRIVKSLNSSAYIRAFSDRPQAMVSGFAKTERTMRALFLRKIHLWPRFQLDVSQELEREPPEVVDIRVSMSNYMVGIQKAIIEVMDACLKEMKKTNKVDVDDLTVESGLFKSFDEIVRRQLDPIWHTLGKRTKQLVSDLKTLRKLLDYLVRYDAVSFLKFLDTLRVSESYRSVWLFAESSYKIFDFAKKRVYRLVKASDVKSKEHVKNKSGKKRNSKGETDSVEAVGGETATNVATGVVVEEVLEEAPKWKVLREILEETQEERLKQAFSEEDNSDNNGIVLVACKDERSCMQLEDCITNNPQKVMREEWEMYLLSKIELRSMQTPQKKKQKTPKGFGILDGVVPVTTIQNSEGSSVGRQEHEALMAAASSIRKLGKTTDMASGNNNPEPHVDKASCTKGKAKKDPTSLRRSLRSCNKKTTNSKPEILPGPENEEKANEASTSAPQEANAVRPSGAKKLPPVHFYALESDQPILDILKPSVIIVYHPDMGFVRELEVYKAENPLRKLKVYFIFYDESTEVQKFEASIRRENEAFESLIRQKSSMIIPVDQDGLCMGSNSSTEFPASSTQNSLTRKAGGRKELEKETQVIVDMREFMSSLPNVLHQKGMKIIPVTLEVGDYILSPSICVERKSIQDLFQSFTSGRLFHQVEMMSRYYRIPVLLIEFSQDKSFSFQSSSDISDDVTPYNIISKLSLLVLHFPRLRLLWSRSLHATAEIFTTLKSNQDEPDETRAIRVGVPSEEGIIENDIRAENYNTSAVEFLRRLPGVSDANYRSIMEKCKSLAELASLPVETLAELMGGHKVAKSLREFLDAKYPTLL.

Positions 256-272 (RRQLDPIWHTLGKRTKQ) match the Nuclear localization signal motif. Disordered stretches follow at residues 343–363 (HVKN…SVEA), 516–593 (TTDM…RPSG), and 697–718 (SSTE…GGRK). Over residues 697–711 (SSTEFPASSTQNSLT) the composition is skewed to polar residues. An ERCC4 domain is found at 725 to 805 (QVIVDMREFM…IPVLLIEFSQ (81 aa)).

The protein belongs to the XPF family. In terms of assembly, heterodimer with ERCC1/RAD10. In terms of tissue distribution, isoform 1 and isoform 2 are widely expressed, predominantly in flowers, meristems and stems. Isoform 3 is detected at low levels.

It localises to the nucleus. Its function is as follows. Seems to be involved in nucleotide excision repair (NER) of damaged DNA (dark repair mechanism). Involved in repair of UV light, and probably oxidative damage. The UVH1/RAD1-ERCC1/RAD10 complex may act as an endonuclease making DNA incision 5' to the lesion site. In vitro, is implicated in double strand breaks (DSBs) repair and is required for homologous recombination in the presence of non-homologous overhangs. May mediate the induction of a DNA-damage sensitive cell-cycle checkpoint during the G2 phase. This is DNA repair endonuclease UVH1 (UVH1) from Arabidopsis thaliana (Mouse-ear cress).